The chain runs to 809 residues: Mediator of RNA polymerase II transcription subunit 15 (809 aa).

3 disordered regions span residues 115 to 137 (AMQGVAGGQQGAGAAGPMQQMIQ), 183 to 211 (QLQQHHQNQQMQHQNQQQQQAQNQQQQNQ), and 413 to 549 (GQMM…ASQS). Positions 119-128 (VAGGQQGAGA) are enriched in gly residues. Positions 446–467 (QQMPQAQQMMSSPSPVQVQTPQ) are enriched in low complexity. A compositionally biased stretch (pro residues) spans 468–484 (SMPPPPQPQPSPQPPSS). Low complexity-rich tracts occupy residues 485–502 (QPNSVSSGPTPSPGGFQP) and 510–520 (QSPASSRTPQS). A compositionally biased stretch (polar residues) spans 533–549 (TPGNPSSVMSPAGASQS).

Belongs to the Mediator complex subunit 15 family. In terms of assembly, component of the Mediator complex. Interacts with srebf1 and srebf2. Interacts with smad2, smad3 and smad4.

The protein resides in the cytoplasm. The protein localises to the nucleus. Component of the Mediator complex, a coactivator involved in the regulated transcription of nearly all RNA polymerase II-dependent genes. Mediator functions as a bridge to convey information from gene-specific regulatory proteins to the basal RNA polymerase II transcription machinery. Mediator is recruited to promoters by direct interactions with regulatory proteins and serves as a scaffold for the assembly of a functional preinitiation complex with RNA polymerase II and the general transcription factors. Required for cholesterol-dependent gene regulation. Positively regulates the Nodal signaling pathway. The sequence is that of Mediator of RNA polymerase II transcription subunit 15 (med15) from Danio rerio (Zebrafish).